A 311-amino-acid polypeptide reads, in one-letter code: Class E basic helix-loop-helix protein 22 (311 aa).

Positions 22 to 170 (AKRMESAFRS…GGSKKSKEQK (149 aa)) are disordered. Positions 81–96 (GESASRSSVAESSGGE) are enriched in low complexity. Residues 125–147 (AGGGGGGGGGGGGGPGGGGGGGL) are compositionally biased toward gly residues. The bHLH domain occupies 171 to 225 (ALRLNINARERRRMHDLNDALDELRAVIPYAHSPSVRKLSKIATLLLAKNYILMQ).

The protein localises to the nucleus. Its function is as follows. May act as a transcriptional repressor. The chain is Class E basic helix-loop-helix protein 22 (BHLHE22) from Gallus gallus (Chicken).